We begin with the raw amino-acid sequence, 398 residues long: Elongation factor Tu (398 aa).

The tr-type G domain maps to 10–207; sequence KPHVNIGTIG…TVDEYIPEPE (198 aa). Residues 19-26 are G1; that stretch reads GHVDHGKT. 19-26 lines the GTP pocket; the sequence is GHVDHGKT. Thr-26 is a Mg(2+) binding site. The G2 stretch occupies residues 63 to 67; that stretch reads GITIN. A G3 region spans residues 84–87; the sequence is DAPG. GTP contacts are provided by residues 84–88 and 139–142; these read DAPGH and NKVD. Positions 139–142 are G4; sequence NKVD. The tract at residues 177–179 is G5; sequence SAL.

It belongs to the TRAFAC class translation factor GTPase superfamily. Classic translation factor GTPase family. EF-Tu/EF-1A subfamily. As to quaternary structure, monomer.

It is found in the cytoplasm. The enzyme catalyses GTP + H2O = GDP + phosphate + H(+). Functionally, GTP hydrolase that promotes the GTP-dependent binding of aminoacyl-tRNA to the A-site of ribosomes during protein biosynthesis. In Streptococcus agalactiae serotype V (strain ATCC BAA-611 / 2603 V/R), this protein is Elongation factor Tu.